The sequence spans 205 residues: MLRALSRLGAGTPCRPRAPLVLPARGRKTRHDPLAKSKIERVNMPPAVDPAEFFVLMERYQHYRQTVRALRMEFVSEVQRKVHEARAGVLAERKALKDAAEHRELMAWNQAENRRLHELRIARLRQEEREQEQRQALEQARKAEEVQAWAQRKEREVLQLQEEVKNFITRENLEARVEAALDSRKNYNWAITREGLVVRPQRRDS.

Residues 1–27 (MLRALSRLGAGTPCRPRAPLVLPARGR) constitute a mitochondrion transit peptide.

It belongs to the mitochondrion-specific ribosomal protein mS26 family. In terms of assembly, component of the mitochondrial small ribosomal subunit (mt-SSU). Mature mammalian 55S mitochondrial ribosomes consist of a small (28S) and a large (39S) subunit. The 28S small subunit contains a 12S ribosomal RNA (12S mt-rRNA) and 30 different proteins. The 39S large subunit contains a 16S rRNA (16S mt-rRNA), a copy of mitochondrial valine transfer RNA (mt-tRNA(Val)), which plays an integral structural role, and 52 different proteins.

It localises to the mitochondrion. This chain is Small ribosomal subunit protein mS26 (MRPS26), found in Homo sapiens (Human).